We begin with the raw amino-acid sequence, 551 residues long: CTP synthase (551 aa).

The tract at residues 1-267 is amidoligase domain; it reads MSGTKYIFVT…DALVLEKLGL (267 aa). Ser15 lines the CTP pocket. Ser15 serves as a coordination point for UTP. 16 to 21 contacts ATP; that stretch reads SIGKGT. Tyr56 contributes to the L-glutamine binding site. ATP is bound at residue Asp73. 2 residues coordinate Mg(2+): Asp73 and Glu141. Residues 148 to 150, 188 to 193, and Lys224 each bind CTP; these read DIE and KTKPTQ. UTP contacts are provided by residues 188 to 193 and Lys224; that span reads KTKPTQ. A Glutamine amidotransferase type-1 domain is found at 292-534; it reads RVAVIGKYIR…VGACLGAAEE (243 aa). Residue Gly355 coordinates L-glutamine. The active-site Nucleophile; for glutamine hydrolysis is Cys382. L-glutamine is bound by residues 383–386, Glu406, and Arg462; that span reads LGMQ. Active-site residues include His507 and Glu509.

Belongs to the CTP synthase family. In terms of assembly, homotetramer.

It carries out the reaction UTP + L-glutamine + ATP + H2O = CTP + L-glutamate + ADP + phosphate + 2 H(+). The catalysed reaction is L-glutamine + H2O = L-glutamate + NH4(+). The enzyme catalyses UTP + NH4(+) + ATP = CTP + ADP + phosphate + 2 H(+). The protein operates within pyrimidine metabolism; CTP biosynthesis via de novo pathway; CTP from UDP: step 2/2. Allosterically activated by GTP, when glutamine is the substrate; GTP has no effect on the reaction when ammonia is the substrate. The allosteric effector GTP functions by stabilizing the protein conformation that binds the tetrahedral intermediate(s) formed during glutamine hydrolysis. Inhibited by the product CTP, via allosteric rather than competitive inhibition. In terms of biological role, catalyzes the ATP-dependent amination of UTP to CTP with either L-glutamine or ammonia as the source of nitrogen. Regulates intracellular CTP levels through interactions with the four ribonucleotide triphosphates. This chain is CTP synthase, found in Rubrobacter xylanophilus (strain DSM 9941 / JCM 11954 / NBRC 16129 / PRD-1).